The primary structure comprises 75 residues: 8.9 kDa basic protein (75 aa).

The protein is 8.9 kDa basic protein (P8.9) of Orgyia pseudotsugata (Douglas-fir tussock moth).